A 524-amino-acid polypeptide reads, in one-letter code: REH2-associated factor 1 (524 aa).

The N-terminal 22 residues, 1-22, are a transit peptide targeting the mitochondrion; the sequence is MRRWLVASMAPQLHQLLQPVRR. A C2H2-type 1; atypical zinc finger spans residues 48–70; sequence ASCPACSRVVHMCDMLTHLITAH. The C2H2-type 2; atypical zinc-finger motif lies at 121 to 147; that stretch reads YMCNWCDRRSDVYATRDKFLKHVADVH. The C2H2-type 4 zinc finger occupies 226-249; sequence FPCELCNRTFNSEIDLLQHLETRH. Residues 286 to 312 form a C2H2-type 3; atypical zinc finger; sequence VICDLCVSSSKVYKMPSALFSHIRFKH. 4 C2H2-type zinc fingers span residues 334-357, 376-399, 406-429, and 443-465; these read FVCT…NSKH, WWCH…QNKH, HPCP…SLQH, and VKCS…AVKH. The disordered stretch occupies residues 463–524; sequence VKHHKKDPRA…KTTEVSEVTS (62 aa). The span at 479–500 shows a compositional bias: low complexity; it reads APTSASHVAASTSAAVPSEVEA.

As to quaternary structure, component of the REH2-associated complex (REH2C) composed of helicase REH2, associated factors H2F1 and H2F2, and mRNAs at various editing stages; the formation of the complex is RNA-independent. Within the complex, interacts with REH2; the interaction is direct. Interacts with various editing complexes including the RNA editing core (RECC) complex, the gRNA-binding (GRBC) complex (also known as the MRB1 complex) and the RNA editing mediator (REMC) complex.

It is found in the mitochondrion. In terms of biological role, plays an important role in mitochondrial mRNA editing by promoting the assembly of the mRNA editosome. Facilitates the recruitment of mRNA to the REH2C complex and promotes the interaction between various editing complexes including REH2C, GRBC, REMC and RECC complexes. This chain is REH2-associated factor 1, found in Trypanosoma brucei brucei (strain 927/4 GUTat10.1).